The primary structure comprises 387 residues: Sorting nexin-7 (387 aa).

The PX domain occupies 30–151 (KDLFITVDAP…VFLTAQAEEL (122 aa)). Residues Arg-73, Gln-75, Lys-103, and Arg-117 each contribute to the a 1,2-diacyl-sn-glycero-3-phospho-(1D-myo-inositol-3-phosphate) site. Positions 178–387 (GVKNRPEEFM…PSEEDSEEKL (210 aa)) constitute a BAR domain.

This sequence belongs to the sorting nexin family. Heterodimer; heterodimerizes with SNX4.

Its subcellular location is the early endosome membrane. Involved in the regulation of endocytosis and in several stages of intracellular trafficking. Together with SNX4, involved in autophagosome assembly by regulating trafficking and recycling of phospholipid scramblase ATG9A. This is Sorting nexin-7 from Mus musculus (Mouse).